The primary structure comprises 821 residues: MAAPVMDTCHVSCCANRAPNVVSWGRGGLIAFGTCNSVAIYNPEEIRVVDLLNKHTGRVNAVQWVHEPDCSPENQLISGGSDNNVIVWEKLDGKFRACAVCSGHSGPVCAVDAVSLSSSHLLVASASSDSTVKLWTYSSDAAECLQTVAFGSGFMMDVSLALLPGSRVPVLACGGDDSRVHLYVQLSGQFQRVLTLTGHEDWVRGVEWANKDGELWLASCSQDCLIRVWRLFAKTAAEPDLQTDGIIKMKENIFQVSGEEFAVTLETVLAGHENWVYGIHWQPPSVKGDSVEQSLKLLSASMDKTMILWGPEEDSGMWVEMVRVGEVGGNTLGFYGCQMSPDGSMILAHAFHGALHLWHHDSNQEWRPSVVISGHFNAVQDMSWDPEGEFIITVGSDQTTRLFTPWTRKGSSQITWHEISRPQIHGYDMQCLTMVGRFQFVSGADEKVLRVFKAPRNFVENFAHISGTSLEKLLGCNDIADLPEGASTPALGLSNKAVFQGDLASPSPQQDGGDFNSLSDQYKESYFQPLKLAEPPTEDDLLQNTLWPEVQKLYGHGFEMFCLASDCARTVVASACKASKAEHASILLWSTASWKQLQSLSCHSLTITQMAFSPNGQLLLAVSRDRTWSLWRRGNPDLDTEAMFSLYANTSKDTSVHTRIIWSCDWSADNKYFVTSSRDKKVIIWGHAVSGVAVGEGEDARVTSCSSVLDVGDSATAVSICPFLCSDHSYLLAVGLENGQILLYKWKPLEDLSSESDWSRCKDTDACQGHTMVVKRLRWRPRLGRGGHGGQDSKEEQAWVQLASAGADHVVKIFDINLSAL.

WD repeat units follow at residues 14–53 (CANR…DLLN), 54–98 (KHTG…FRAC), 103–145 (GHSG…AECL), 151–193 (GSGF…FQRV), 198–239 (GHED…AAEP), 271–319 (GHEN…GMWV), 329–368 (GNTL…EWRP), 374–413 (GHFN…GSSQ), 424–462 (IHGY…VENF), 602–641 (CHSL…LDTE), 656–695 (VHTR…VAVG), 715–754 (ATAV…DLSS), and 769–821 (GHTM…LSAL).

Belongs to the WD repeat ELP2 family. As to quaternary structure, component of the elongator complex.

It localises to the cytoplasm. Its subcellular location is the nucleus. The protein operates within tRNA modification; 5-methoxycarbonylmethyl-2-thiouridine-tRNA biosynthesis. Its function is as follows. Component of the elongator complex which is required for multiple tRNA modifications, including mcm5U (5-methoxycarbonylmethyl uridine), mcm5s2U (5-methoxycarbonylmethyl-2-thiouridine), and ncm5U (5-carbamoylmethyl uridine). The elongator complex catalyzes the formation of carboxymethyluridine in the wobble base at position 34 in tRNAs. This is Elongator complex protein 2 (elp2) from Danio rerio (Zebrafish).